The sequence spans 316 residues: Glutamyl endopeptidase (316 aa).

The N-terminal stretch at 1–30 (MVSKKSVKRGLITGLIGISIYSLGMHPAQA) is a signal peptide. Residues 31–94 (APSPHTPVSS…SPAKAPYSIK (64 aa)) constitute a propeptide that is removed on maturation. Cysteine 126 and cysteine 142 are joined by a disulfide. Residues histidine 141 and serine 261 each act as charge relay system in the active site. Residues cysteine 275 and cysteine 279 are joined by a disulfide bond.

It belongs to the peptidase S1B family.

Its subcellular location is the secreted. The catalysed reaction is Preferential cleavage: Glu-|-Xaa, Asp-|-Xaa.. In terms of biological role, specific for hydrolysis of peptide bonds on the carboxyl side of acidic amino acid residues, with a strong preference for Glu. This chain is Glutamyl endopeptidase (blaSE), found in Bacillus licheniformis (strain ATCC 14580 / DSM 13 / JCM 2505 / CCUG 7422 / NBRC 12200 / NCIMB 9375 / NCTC 10341 / NRRL NRS-1264 / Gibson 46).